We begin with the raw amino-acid sequence, 353 residues long: Protein disulfide isomerase CRELD2 (353 aa).

Residues Met1–Ala24 form the signal peptide. Residues Cys31–Cys34 carry the CXXC motif. Intrachain disulfides connect Cys31–Cys34, Cys140–Cys154, Cys148–Cys166, and Cys168–Cys177. The 43-residue stretch at Asp136–Thr178 folds into the EGF-like 1 domain. The FU 1 repeat unit spans residues His193 to Pro240. N-linked (GlcNAc...) asparagine glycosylation occurs at Asn251. One copy of the FU 2 repeat lies at Ser253 to Val302. A CXXC motif is present at residues Cys263–Cys266. 4 disulfides stabilise this stretch: Cys263–Cys266, Cys294–Cys308, Cys301–Cys317, and Cys319–Cys330. The EGF-like 2; calcium-binding domain occupies Asp290–Val331. The disordered stretch occupies residues Pro332–Leu353. Residues Glu342–Leu353 are compositionally biased toward polar residues.

The protein belongs to the CRELD family. In terms of assembly, interacts with CHRNA4. Component of a complex containing at least CRELD2, MANF, MATN3 and PDIA4. In terms of tissue distribution, ubiquitously expressed. Highly expressed in skeletal muscle, heart, liver, kidney and placenta.

The protein localises to the endoplasmic reticulum. It catalyses the reaction Catalyzes the rearrangement of -S-S- bonds in proteins.. Protein disulfide isomerase. Might play a role in the unfolded protein response. May regulate transport of alpha4-beta2 neuronal acetylcholine receptor. The protein is Protein disulfide isomerase CRELD2 (CRELD2) of Homo sapiens (Human).